The following is a 178-amino-acid chain: Large ribosomal subunit protein bL17 (178 aa).

The segment at 150 to 178 is disordered; sequence PADEPVVAEENAPQSAVKDAVDECEGKAD. Positions 168 to 178 are enriched in basic and acidic residues; it reads DAVDECEGKAD.

This sequence belongs to the bacterial ribosomal protein bL17 family. As to quaternary structure, part of the 50S ribosomal subunit. Contacts protein L32.

The sequence is that of Large ribosomal subunit protein bL17 from Geobacter metallireducens (strain ATCC 53774 / DSM 7210 / GS-15).